A 514-amino-acid chain; its full sequence is Major facilitator superfamily domain-containing protein 4A (514 aa).

5 consecutive transmembrane segments (helical) span residues 19-39, 53-73, 82-102, 107-127, and 139-159; these read LTYWSVFFSFGLCIAFLGPTL, ISWVFLSQQLCLLLGSALGGV, LWALFTSSLAISLVFAVIPFC, VLALVMALAGLAMGCIDTVAN, and AVFLQVLHFFVGFGALLSPLI. Asn-177 and Asn-203 each carry an N-linked (GlcNAc...) asparagine glycan. 7 helical membrane-spanning segments follow: residues 221–241, 307–327, 347–367, 376–396, 400–420, 438–458, and 466–486; these read YAFWIMALINLPVPMAVLMLL, FFAIHITAALVLFMTDGLTGA, VAGYLPSLFWGFITLGRLLSI, ATMVFINVVGVVVTFLVLLIF, VVFLFVGTASLGLFLSSTFPS, VLVTGAGVGEMVLQMLVGSIF, and FLVCGVIFGCLAFTFYILLLF.

It belongs to the major facilitator superfamily.

It localises to the membrane. This Pongo abelii (Sumatran orangutan) protein is Major facilitator superfamily domain-containing protein 4A (MFSD4A).